The chain runs to 277 residues: MGLLECCARCLVGAPFASLVATGLCFFGVALFCGCGHEALTGTEKLIETYFSKNYQDYEYLINVIHAFQYVIYGTASFFFLYGALLLAEGFYTTGAVRQIFGDYKTTICGKGLSATVTGGQKGRGSRGQHQAHSLERVCHCLGKWLGHPDKFVGITYALTIVWLLVFACSAVPVYIYFNTWTTCQSIAFPSKTSASIGSLCADARMYGVLPWNAFPGKVCGSNLLSICKTAEFQMTFHLFIAAFVGAAATLVSLLTFMIAATYNFAVLKLMGRGTKF.

At 1 to 10 the chain is on the cytoplasmic side; that stretch reads MGLLECCARC. Residues cysteine 6, cysteine 7, and cysteine 10 are each lipidated (S-palmitoyl cysteine). The chain crosses the membrane as a helical span at residues 11–36; sequence LVGAPFASLVATGLCFFGVALFCGCG. At 37–59 the chain is on the extracellular side; sequence HEALTGTEKLIETYFSKNYQDYE. A helical transmembrane segment spans residues 60 to 88; sequence YLINVIHAFQYVIYGTASFFFLYGALLLA. At 89–151 the chain is on the cytoplasmic side; the sequence is EGFYTTGAVR…LGKWLGHPDK (63 aa). A lipid anchor (S-palmitoyl cysteine) is attached at cysteine 109. Phosphoserine is present on serine 114. Residues threonine 116 and threonine 118 each carry the phosphothreonine modification. 2 S-palmitoyl cysteine lipidation sites follow: cysteine 139 and cysteine 141. Residues 152-178 traverse the membrane as a helical segment; that stretch reads FVGITYALTIVWLLVFACSAVPVYIYF. At 179–238 the chain is on the extracellular side; that stretch reads NTWTTCQSIAFPSKTSASIGSLCADARMYGVLPWNAFPGKVCGSNLLSICKTAEFQMTFH. 2 disulfides stabilise this stretch: cysteine 184–cysteine 228 and cysteine 201–cysteine 220. Serine 199 carries the O-palmitoyl serine lipid modification. Residues 239 to 268 traverse the membrane as a helical segment; that stretch reads LFIAAFVGAAATLVSLLTFMIAATYNFAVL. Residues 269-277 lie on the Cytoplasmic side of the membrane; sequence KLMGRGTKF.

It belongs to the myelin proteolipid protein family.

The protein localises to the cell membrane. It is found in the myelin membrane. Functionally, this is the major myelin protein from the central nervous system. It plays an important role in the formation or maintenance of the multilamellar structure of myelin. In Canis lupus familiaris (Dog), this protein is Myelin proteolipid protein (PLP1).